A 198-amino-acid chain; its full sequence is NAD(P)H dehydrogenase (quinone) (198 aa).

The 186-residue stretch at 4–189 (VLVLYYSMYG…SIARYQGEYV (186 aa)) folds into the Flavodoxin-like domain. FMN-binding positions include 10–15 (SMYGHI) and 78–80 (TRF). Tyr-12 contacts NAD(+). Position 98 (Trp-98) interacts with substrate. FMN-binding positions include 113 to 118 (STGTGG) and His-133.

This sequence belongs to the WrbA family. FMN is required as a cofactor.

The enzyme catalyses a quinone + NADH + H(+) = a quinol + NAD(+). It carries out the reaction a quinone + NADPH + H(+) = a quinol + NADP(+). The protein is NAD(P)H dehydrogenase (quinone) of Escherichia coli O157:H7.